Here is an 868-residue protein sequence, read N- to C-terminus: Ionotropic receptor 93a (868 aa).

The signal sequence occupies residues 1–28 (MNPGEMRPSACLLLLAGLQLSILVPTEA). Topologically, residues 29–565 (NDFSSFLSAN…ITRKPDEVSR (537 aa)) are extracellular. 8 N-linked (GlcNAc...) asparagine glycosylation sites follow: Asn38, Asn205, Asn294, Asn305, Asn432, Asn475, Asn499, and Asn543. The helical transmembrane segment at 566-586 (IYLFTAPFTVETWFCLMGIIL) threads the bilayer. Over 587–642 (LTAPTLYAINRLAPLKEMRIVGLSTVKSCFWYIFGALLQQGGMYLPTADSGRLVVG) the chain is Cytoplasmic. Residues 643 to 663 (FWWIVVIVLVTTYCGNLVAFL) traverse the membrane as a helical segment. The Extracellular segment spans residues 664–832 (TFPKFQPGVD…HKVNMDDMQG (169 aa)). N-linked (GlcNAc...) asparagine glycosylation is present at Asn691. The helical transmembrane segment at 833 to 853 (CFLVLLLGFTLALLIVCGEFW) threads the bilayer. Residues 854 to 868 (YRRFRASRKRRQFTN) are Cytoplasmic-facing.

Belongs to the glutamate-gated ion channel (TC 1.A.10.1) family. In the antenna, detected in sacculus neurons which innervate the first and second chambers (at protein level). Expressed in multiple cells of the larval dorsal organ ganglion, including the dorsal organ cool cells where it is predominately localized to the dendritic bulbs (at protein level).

The protein resides in the cell membrane. Its function is as follows. Integral part of various neural sensory systems in the antenna that provide the neural basis for the response to environmental changes in temperature (thermosensation) and humidity (hygrosensation). Together with Ir21a and Ir25a, mediates the response of the larval dorsal organ cool cells, a trio of cool-responsive neurons, to cooling and is required for cool avoidance behavior. Together with Ir25a and Ir40a, mediates the response of the hydrosensory sacculus neurons to changes in relative humidity, and is required for dry detection and humidiy preference behavior. The chain is Ionotropic receptor 93a from Drosophila melanogaster (Fruit fly).